Reading from the N-terminus, the 91-residue chain is Probable Fe(2+)-trafficking protein (91 aa).

Belongs to the Fe(2+)-trafficking protein family.

In terms of biological role, could be a mediator in iron transactions between iron acquisition and iron-requiring processes, such as synthesis and/or repair of Fe-S clusters in biosynthetic enzymes. This is Probable Fe(2+)-trafficking protein from Burkholderia ambifaria (strain MC40-6).